The primary structure comprises 354 residues: DNA polymerase IV (354 aa).

In terms of domain architecture, UmuC spans 3 to 188 (VIFVDFDYFF…LDIDEIPGIG (186 aa)). Positions 7 and 105 each coordinate Mg(2+). Residue Glu106 is part of the active site.

Belongs to the DNA polymerase type-Y family. In terms of assembly, monomer. It depends on Mg(2+) as a cofactor.

It localises to the cytoplasm. The catalysed reaction is DNA(n) + a 2'-deoxyribonucleoside 5'-triphosphate = DNA(n+1) + diphosphate. Poorly processive, error-prone DNA polymerase involved in untargeted mutagenesis. Copies undamaged DNA at stalled replication forks, which arise in vivo from mismatched or misaligned primer ends. These misaligned primers can be extended by PolIV. Exhibits no 3'-5' exonuclease (proofreading) activity. May be involved in translesional synthesis. This Sulfolobus acidocaldarius (strain ATCC 33909 / DSM 639 / JCM 8929 / NBRC 15157 / NCIMB 11770) protein is DNA polymerase IV.